The primary structure comprises 158 residues: MHIVEGHIEAKSAKVAIVVSRFNSFVVESLLSGAIDTLKRFGQVSEDNITVVRVPGAFELPLAAKKVAASGKFDGIIALGAVIRGGTPHFDFVAGECNKGLAQVSLEFNTPVSFGVLTTDTIEQAIERSGTKAGNKGGEAALGLLEMVNVLNAIDKEL.

5-amino-6-(D-ribitylamino)uracil is bound by residues Phe22, 57–59 (AFE), and 81–83 (AVI). 86–87 (GT) is a binding site for (2S)-2-hydroxy-3-oxobutyl phosphate. The active-site Proton donor is the His89. Phe114 contacts 5-amino-6-(D-ribitylamino)uracil. Arg128 serves as a coordination point for (2S)-2-hydroxy-3-oxobutyl phosphate.

This sequence belongs to the DMRL synthase family. As to quaternary structure, forms an icosahedral capsid composed of 60 subunits, arranged as a dodecamer of pentamers.

The catalysed reaction is (2S)-2-hydroxy-3-oxobutyl phosphate + 5-amino-6-(D-ribitylamino)uracil = 6,7-dimethyl-8-(1-D-ribityl)lumazine + phosphate + 2 H2O + H(+). The protein operates within cofactor biosynthesis; riboflavin biosynthesis; riboflavin from 2-hydroxy-3-oxobutyl phosphate and 5-amino-6-(D-ribitylamino)uracil: step 1/2. In terms of biological role, catalyzes the formation of 6,7-dimethyl-8-ribityllumazine by condensation of 5-amino-6-(D-ribitylamino)uracil with 3,4-dihydroxy-2-butanone 4-phosphate. This is the penultimate step in the biosynthesis of riboflavin. The chain is 6,7-dimethyl-8-ribityllumazine synthase from Shewanella amazonensis (strain ATCC BAA-1098 / SB2B).